A 172-amino-acid polypeptide reads, in one-letter code: Myosin regulatory light polypeptide 9 (172 aa).

A compositionally biased stretch (basic residues) spans 1–16 (MSSKRAKAKTTKKRPQ). The interval 1-20 (MSSKRAKAKTTKKRPQRATS) is disordered. The residue at position 2 (Ser2) is an N-acetylserine. Thr19 bears the Phosphothreonine; by MLCK, CIT and ROCK2 mark. Ser20 carries the phosphoserine; by CDC42BP, CIT, MLCK, PAK1, ROCK1, ROCK2, DAPK1, DAPK2 and ZIPK/DAPK3 modification. EF-hand domains lie at 29–64 (SQIQ…LGKN), 98–133 (DPED…MGDR), and 134–169 (FTDE…GAKD). Residues Asp42, Asn44, Asp46, and Asp53 each contribute to the Ca(2+) site.

In terms of assembly, myosin is a hexamer of 2 heavy chains and 4 light chains: interacts with myosin heavy chain MYO19. Interacts with LUZP1; the interaction results in inhibition of phosphorylation of MYL9 by DAPK3. Phosphorylation increases the actin-activated myosin ATPase activity and thereby regulates the contractile activity. It is required to generate the driving force in the migration of the cells but not necessary for localization of myosin-2 at the leading edge. Phosphorylation is required for myotube formation. Phosphorylated by DAPK3; DAPK3-mediated phosphorylation is inhibited by LUZP1. As to expression, smooth muscle tissues and in some, but not all, nonmuscle cells.

The protein localises to the cytoplasm. Its subcellular location is the cytoskeleton. It is found in the cell cortex. Functionally, myosin regulatory subunit that plays an important role in regulation of both smooth muscle and nonmuscle cell contractile activity via its phosphorylation. Implicated in cytokinesis, receptor capping, and cell locomotion. In myoblasts, may regulate PIEZO1-dependent cortical actomyosin assembly involved in myotube formation. The sequence is that of Myosin regulatory light polypeptide 9 (MYL9) from Homo sapiens (Human).